A 525-amino-acid polypeptide reads, in one-letter code: uncharacterized protein (525 aa).

A run of 6 helical transmembrane segments spans residues 7–29 (FLATHQLLTILIVLASGALLGQI), 34–51 (LRFGAAGALFMGLVVGAL), 64–82 (GLGVVLFCYTVGLAAGSTF), 92–114 (LMLAGVVGLAVMAAAGLGLGRLF), 121–143 (VAGLYAGVLTSPAIDAASMATHG), and 148–170 (LVGYALSYPVGVVVGLIMVAIIA). RCK C-terminal domains are found at residues 178–257 (KDNT…LGHV) and 259–341 (ERTL…LFGD). A run of 5 helical transmembrane segments spans residues 351 to 370 (ALSLGLGAALGLLLGALMVA), 374 to 396 (GLQFELGTAAGPLVMGMILGSIH), 416 to 438 (LGLMIFLACVGLASGPAFLSQAV), 443 to 465 (LAVIAVSAVTLVLGGAIVIAAAW), and 502 to 524 (SAYGALFALGTVVKILLVQVIVL).

It belongs to the AAE transporter (TC 2.A.81) family.

The protein localises to the cell membrane. This is an uncharacterized protein from Cutibacterium acnes (strain DSM 16379 / KPA171202) (Propionibacterium acnes).